A 156-amino-acid polypeptide reads, in one-letter code: Small ribosomal subunit protein uS7 (156 aa).

This sequence belongs to the universal ribosomal protein uS7 family. In terms of assembly, part of the 30S ribosomal subunit. Contacts proteins S9 and S11.

Its function is as follows. One of the primary rRNA binding proteins, it binds directly to 16S rRNA where it nucleates assembly of the head domain of the 30S subunit. Is located at the subunit interface close to the decoding center, probably blocks exit of the E-site tRNA. The sequence is that of Small ribosomal subunit protein uS7 from Rhodococcus opacus (strain B4).